The primary structure comprises 557 residues: Aerobic glycerol-3-phosphate dehydrogenase (557 aa).

D21–E49 lines the FAD pocket.

The protein belongs to the FAD-dependent glycerol-3-phosphate dehydrogenase family. Requires FAD as cofactor.

The protein resides in the cytoplasm. The enzyme catalyses a quinone + sn-glycerol 3-phosphate = dihydroxyacetone phosphate + a quinol. It functions in the pathway polyol metabolism; glycerol degradation via glycerol kinase pathway; glycerone phosphate from sn-glycerol 3-phosphate (aerobic route): step 1/1. This chain is Aerobic glycerol-3-phosphate dehydrogenase (glpD), found in Staphylococcus aureus (strain MRSA252).